The primary structure comprises 295 residues: Caffeine dehydrogenase subunit beta (295 aa).

The 178-residue stretch at M1–Q178 folds into the FAD-binding PCMH-type domain. Residues A32–S36 and T111–N115 contribute to the FAD site.

Heterotrimer composed of an alpha (CdhA), a beta (CdhB) and a gamma (CdhC) subunit.

It carries out the reaction caffeine + a ubiquinone + H2O = 1,3,7-trimethylurate + a ubiquinol. The catalysed reaction is ubiquinone-0 + caffeine + H2O = ubiquinol-0 + 1,3,7-trimethylurate. The enzyme catalyses theobromine + a ubiquinone + H2O = 3,7-dimethylurate + a ubiquinol. In terms of biological role, component of the caffeine dehydrogenase complex that catalyzes the hydrolytical oxidation of 1,3,7-trimethylxanthine (caffeine) by incorporation of an oxygen atom originating from a water molecule into position C-8 to produce 1,3,7-trimethyluric acid (TMU). Coenzyme Q0 (ubiquinone-0) is the preferred electron acceptor and, to a lesser extent, coenzyme Q2 (ubiquinone-2) can also be used, but oxygen and NAD(P)(+) cannot. Is involved in a caffeine degradation pathway that allows Pseudomonas sp. strain CBB1 to grow on caffeine as the sole carbon and nitrogen source. Is also active with theobromine as substrate, but shows a very poor activity with theophylline and is not active with xanthine, 3-methylxanthine, 7-methylxanthine, TMU, and 3,7-dimethylurate. The chain is Caffeine dehydrogenase subunit beta from Pseudomonas sp. (strain CBB1).